The sequence spans 477 residues: C3a anaphylatoxin chemotactic receptor (477 aa).

Topologically, residues 1-23 (MESFDADTNSTDLHSRPLFQPQD) are extracellular. The N-linked (GlcNAc...) asparagine glycan is linked to asparagine 9. Residues 24-46 (IASMVILGLTCLLGLLGNGLVLW) form a helical membrane-spanning segment. The Cytoplasmic portion of the chain corresponds to 47 to 57 (VAGVKMKTTVN). Residues 58–80 (TVWFLHLTLADFLCCLSLPFSLA) traverse the membrane as a helical segment. Residues 81–96 (HLILQGHWPYGLFLCK) are Extracellular-facing. Cysteines 95 and 172 form a disulfide. Residues 97–118 (LIPSIIILNMFASVFLLTAISL) traverse the membrane as a helical segment. Residues 119–139 (DRCLIVHKPIWCQNHRNVRTA) lie on the Cytoplasmic side of the membrane. The chain crosses the membrane as a helical span at residues 140-160 (FAICGCVWVVAFVMCVPVFVY). At 161–333 (RDLFIMDNRS…TPLMAITITR (173 aa)) the chain is on the extracellular side. Asparagine 168 carries N-linked (GlcNAc...) asparagine glycosylation. Residues tyrosine 174 and tyrosine 184 each carry the sulfotyrosine modification. Asparagine 197 and asparagine 201 each carry an N-linked (GlcNAc...) asparagine glycan. Tyrosine 312 is modified (sulfotyrosine). A helical membrane pass occupies residues 334–353 (LVVGFLVPFFIMVICYSLIV). Residues 354–370 (FRMRKTNFTKSRNKTFR) are Cytoplasmic-facing. A helical transmembrane segment spans residues 371–393 (VAVAVVTVFFICWTPYHLVGVLL). Residues 394 to 410 (LITDPESSLGEAVMSWD) are Extracellular-facing. A helical membrane pass occupies residues 411 to 431 (HMSIALASANSCFNPFLYALL). The Cytoplasmic segment spans residues 432-477 (GKDFRKKARQSIKGILEAAFSEELTHSTNCTQDKASSKRNNMSTDV). At serine 452 the chain carries Phosphoserine. Threonine 456 carries the phosphothreonine modification.

It belongs to the G-protein coupled receptor 1 family. In terms of assembly, interacts with VGF-derived peptide TLQP-21. As to expression, detected in varying levels in all tissues examined except the spleen. Especially abundant in heart and lung.

It localises to the cell membrane. Functionally, receptor for the chemotactic and inflammatory peptide anaphylatoxin C3a. This receptor stimulates chemotaxis, granule enzyme release and superoxide anion production. In Mus musculus (Mouse), this protein is C3a anaphylatoxin chemotactic receptor (C3ar1).